Consider the following 603-residue polypeptide: Terpenoid synthase 22 (603 aa).

Mg(2+) contacts are provided by D356, D360, N500, and E508. The DDXXD motif motif lies at 356–360 (DDTCD).

Belongs to the terpene synthase family. Tpsa subfamily. Mg(2+) is required as a cofactor. Requires Mn(2+) as cofactor. Predominantly expressed in siliques but also in flowers.

It localises to the cytoplasm. It functions in the pathway secondary metabolite biosynthesis; terpenoid biosynthesis. Its function is as follows. Involved in terpene biosynthesis in roots. Possesses sesquiterpene (C15) synthase activity in vitro. Does not seem to be involved in diterpene (C20) biosynthesis. This Arabidopsis thaliana (Mouse-ear cress) protein is Terpenoid synthase 22.